The chain runs to 389 residues: DNA replication and repair protein RecF (389 aa).

ATP is bound at residue 30–37 (GPNGFGKT).

The protein belongs to the RecF family.

The protein localises to the cytoplasm. The RecF protein is involved in DNA metabolism; it is required for DNA replication and normal SOS inducibility. RecF binds preferentially to single-stranded, linear DNA. It also seems to bind ATP. The sequence is that of DNA replication and repair protein RecF from Mycolicibacterium gilvum (strain PYR-GCK) (Mycobacterium gilvum (strain PYR-GCK)).